A 90-amino-acid chain; its full sequence is Acylphosphatase (90 aa).

Positions 5–90 (CEKFVVSGIV…CREYQGFEIL (86 aa)) constitute an Acylphosphatase-like domain. Catalysis depends on residues Arg-20 and Asn-38.

It belongs to the acylphosphatase family.

The catalysed reaction is an acyl phosphate + H2O = a carboxylate + phosphate + H(+). The polypeptide is Acylphosphatase (acyP) (Vibrio vulnificus (strain CMCP6)).